The following is a 441-amino-acid chain: DILAAFRVTPQPGVPPEEAGXAVAAESSTGTWXTVWTDGLTSLDRYKGRCYKIEPIAGEENQYIAYVAYPLDLFEEGSVTNMFTSIVGNVFGFKALXALRLEDLRIPVAYVKTFQGPXHGIQVERDKLNKYGRPLLGCTIKPKLGLSAKNYGRAVYECLRGGLDFTKDDENVNSQPFMRWRDRFLFCAEAIYKAQAETGEIKGHYLSATAGTCEEMMKRAIFARELGVPIVMHDYLTGGFTANTSLAHYCRDNGLLLHIHRAMHAVIDRQKNHGXXFRVLXKALRMSGGDHIHSGTVVGKLEGERDITLGFVDLLRDDFIEKDRSRGIYFTQDWVSLPGVLPVASGGIHVXHMPALTEIFGDDSVLQFGGGTLGHPWGNRPGAVANRVALEACVQARNEGRDLASEGNEIIREATKWSPELAAACEVWKEIKFEFQAMDTL.

Positions 89 and 139 each coordinate substrate. The Proton acceptor role is filled by Lys141. Lys143 contributes to the substrate binding site. Mg(2+)-binding residues include Lys167, Asp169, and Glu170. Lys167 carries the post-translational modification N6-carboxylysine. The active-site Proton acceptor is the His260. Positions 261, 293, and 345 each coordinate substrate.

The protein belongs to the RuBisCO large chain family. Type I subfamily. As to quaternary structure, heterohexadecamer of 8 large chains and 8 small chains; disulfide-linked. The disulfide link is formed within the large subunit homodimers. It depends on Mg(2+) as a cofactor. In terms of processing, the disulfide bond which can form in the large chain dimeric partners within the hexadecamer appears to be associated with oxidative stress and protein turnover.

It localises to the plastid. It is found in the chloroplast. It carries out the reaction 2 (2R)-3-phosphoglycerate + 2 H(+) = D-ribulose 1,5-bisphosphate + CO2 + H2O. It catalyses the reaction D-ribulose 1,5-bisphosphate + O2 = 2-phosphoglycolate + (2R)-3-phosphoglycerate + 2 H(+). Its function is as follows. RuBisCO catalyzes two reactions: the carboxylation of D-ribulose 1,5-bisphosphate, the primary event in carbon dioxide fixation, as well as the oxidative fragmentation of the pentose substrate in the photorespiration process. Both reactions occur simultaneously and in competition at the same active site. This Coriandrum sativum (Coriander) protein is Ribulose bisphosphate carboxylase large chain.